We begin with the raw amino-acid sequence, 300 residues long: Porphobilinogen deaminase (300 aa).

The residue at position 239 (C239) is an S-(dipyrrolylmethanemethyl)cysteine.

It belongs to the HMBS family. In terms of assembly, monomer. The cofactor is dipyrromethane.

The catalysed reaction is 4 porphobilinogen + H2O = hydroxymethylbilane + 4 NH4(+). The protein operates within porphyrin-containing compound metabolism; protoporphyrin-IX biosynthesis; coproporphyrinogen-III from 5-aminolevulinate: step 2/4. In terms of biological role, tetrapolymerization of the monopyrrole PBG into the hydroxymethylbilane pre-uroporphyrinogen in several discrete steps. The sequence is that of Porphobilinogen deaminase from Francisella tularensis subsp. holarctica (strain OSU18).